Consider the following 122-residue polypeptide: Large ribosomal subunit protein uL14 (122 aa).

This sequence belongs to the universal ribosomal protein uL14 family. In terms of assembly, part of the 50S ribosomal subunit. Forms a cluster with proteins L3 and L19. In the 70S ribosome, L14 and L19 interact and together make contacts with the 16S rRNA in bridges B5 and B8.

In terms of biological role, binds to 23S rRNA. Forms part of two intersubunit bridges in the 70S ribosome. The sequence is that of Large ribosomal subunit protein uL14 from Thermosipho africanus (strain TCF52B).